We begin with the raw amino-acid sequence, 2149 residues long: Serine/threonine-protein kinase WNK2 (2149 aa).

Positions 1-10 (MDGDGGRRDA) are enriched in basic and acidic residues. Disordered regions lie at residues 1–75 (MDGD…QRRV) and 87–183 (ERAR…EDDL). An omega-N-methylarginine mark is found at Arg-19 and Arg-30. Residue Ser-45 is modified to Phosphoserine. The span at 95–114 (APAPAAPAAPPGSPSVPSDP) shows a compositional bias: pro residues. The segment covering 161–172 (AKPEPGRARKDE) has biased composition (basic and acidic residues). Positions 173-182 (PEEEEDDEDD) are enriched in acidic residues. Residues 195-453 (LKFDIELGRG…IKDLLSHAFF (259 aa)) enclose the Protein kinase domain. ATP contacts are provided by residues Ser-205, 275-278 (TELM), and Lys-325. Catalysis depends on Asp-342, which acts as the Proton acceptor. Ser-352 and Ser-356 each carry phosphoserine; by autocatalysis. Ser-560 carries the post-translational modification Phosphoserine. 3 disordered regions span residues 578 to 630 (HAQS…DSQS), 703 to 728 (SMSF…APPV), and 1067 to 1133 (QEEQ…ERAS). Over residues 605 to 625 (ASVTSLASDSTFDSGQGSTVY) the composition is skewed to polar residues. The span at 709-728 (VLPPPSTPVPTGPSQPAPPV) shows a compositional bias: pro residues. Polar residues predominate over residues 1081–1092 (QSSESFGGSDVT). At Ser-1098 the chain carries Phosphoserine. Over residues 1115–1126 (ARKHHRRSTRAR) the composition is skewed to basic residues. Ser-1210 bears the Phosphoserine mark. Disordered regions lie at residues 1211-1234 (EDTD…CGLA) and 1270-1502 (PATD…GFVD). Low complexity-rich tracts occupy residues 1275–1292 (SESS…EASQ) and 1317–1353 (SQAG…STVP). Residues 1386–1400 (RSAQCTAQPLSTGQG) are compositionally biased toward polar residues. The span at 1470 to 1485 (LPSPPLGPTAPPPPPS) shows a compositional bias: pro residues. Ser-1507, Ser-1566, and Ser-1594 each carry phosphoserine. Disordered regions lie at residues 1521–1727 (VPTS…PSSP) and 1739–1778 (ASSI…GGVA). Residues 1553–1567 (SDKTPSLTQQTQPSL) show a composition bias toward polar residues. Residues 1587–1597 (SSPMTAESSSS) are compositionally biased toward low complexity. Over residues 1610-1629 (ASDSSTAPSVPQDASGSSVP) the composition is skewed to polar residues. A phosphoserine mark is found at Ser-1725, Ser-1726, Ser-1770, and Ser-1797. Polar residues predominate over residues 1916–1928 (ASSTGHLSDSSRG). The disordered stretch occupies residues 1916-1947 (ASSTGHLSDSSRGPPTKDPRGTKAVQTQQPCS). Ser-1962 is subject to Phosphoserine. Positions 2018–2031 (SSLYDSPGSSTSSL) are enriched in polar residues. Disordered regions lie at residues 2018-2044 (SSLY…PTLH) and 2122-2149 (GPLS…EKPD). Positions 2122-2135 (GPLSTTATPGATPA) are enriched in low complexity.

The protein belongs to the protein kinase superfamily. Ser/Thr protein kinase family. WNK subfamily. As to quaternary structure, forms a complex with the phosphorylated form of STK39 in the brain. It depends on Mg(2+) as a cofactor. Autophosphorylated. Autophosphorylation at Ser-352 and Ser-356 promotes its activity. Brain and heart.

The protein localises to the cytoplasm. The protein resides in the cell membrane. The enzyme catalyses L-seryl-[protein] + ATP = O-phospho-L-seryl-[protein] + ADP + H(+). The catalysed reaction is L-threonyl-[protein] + ATP = O-phospho-L-threonyl-[protein] + ADP + H(+). With respect to regulation, activation requires autophosphorylation of Ser-356 and, to a lower extent, Ser-352. Functionally, serine/threonine-protein kinase component of the WNK2-SPAK/OSR1 kinase cascade, which plays an important role in the regulation of electrolyte homeostasis, cell signaling, survival, and proliferation. The WNK2-SPAK/OSR1 kinase cascade is composed of WNK2, which mediates phosphorylation and activation of downstream kinases OXSR1/OSR1 and STK39/SPAK. Following activation, OXSR1/OSR1 and STK39/SPAK catalyze phosphorylation of ion cotransporters, regulating their activity. Acts as an activator and inhibitor of sodium-coupled chloride cotransporters and potassium-coupled chloride cotransporters respectively. Activates SLC12A2, SCNN1A, SCNN1B, SCNN1D and SGK1 and inhibits SLC12A5. Negatively regulates the EGF-induced activation of the ERK/MAPK-pathway and the downstream cell cycle progression. Affects MAPK3/MAPK1 activity by modulating the activity of MAP2K1 and this modulation depends on phosphorylation of MAP2K1 by PAK1. WNK2 acts by interfering with the activity of PAK1 by controlling the balance of the activity of upstream regulators of PAK1 activity, RHOA and RAC1, which display reciprocal activity. The protein is Serine/threonine-protein kinase WNK2 of Mus musculus (Mouse).